Reading from the N-terminus, the 166-residue chain is NAD(P)H-quinone oxidoreductase subunit I, chloroplastic (166 aa).

2 consecutive 4Fe-4S ferredoxin-type domains span residues 55–84 (GRIH…VDWK) and 95–124 (LNYS…MTEE). [4Fe-4S] cluster is bound by residues cysteine 64, cysteine 67, cysteine 70, cysteine 74, cysteine 104, cysteine 107, cysteine 110, and cysteine 114.

This sequence belongs to the complex I 23 kDa subunit family. As to quaternary structure, NDH is composed of at least 16 different subunits, 5 of which are encoded in the nucleus. The cofactor is [4Fe-4S] cluster.

Its subcellular location is the plastid. It is found in the chloroplast thylakoid membrane. It carries out the reaction a plastoquinone + NADH + (n+1) H(+)(in) = a plastoquinol + NAD(+) + n H(+)(out). The catalysed reaction is a plastoquinone + NADPH + (n+1) H(+)(in) = a plastoquinol + NADP(+) + n H(+)(out). NDH shuttles electrons from NAD(P)H:plastoquinone, via FMN and iron-sulfur (Fe-S) centers, to quinones in the photosynthetic chain and possibly in a chloroplast respiratory chain. The immediate electron acceptor for the enzyme in this species is believed to be plastoquinone. Couples the redox reaction to proton translocation, and thus conserves the redox energy in a proton gradient. This is NAD(P)H-quinone oxidoreductase subunit I, chloroplastic from Oxypappus scaber.